Reading from the N-terminus, the 688-residue chain is Potassium-transporting ATPase ATP-binding subunit (688 aa).

Transmembrane regions (helical) follow at residues 34 to 54 (PVMF…LAIL), 62 to 82 (AMFT…ANMA), 219 to 239 (VALT…TATL), and 260 to 280 (VLVA…LSAI). Asp313 functions as the 4-aspartylphosphate intermediate in the catalytic mechanism. ATP is bound by residues Asp350, Glu354, 383–390 (FSAQTRMS), and Lys401. Positions 524 and 528 each coordinate Mg(2+). 3 helical membrane passes run 594 to 614 (FAII…LNIM), 622 to 642 (AILS…PLAL), and 662 to 682 (IYGL…DLLL).

It belongs to the cation transport ATPase (P-type) (TC 3.A.3) family. Type IA subfamily. The system is composed of three essential subunits: KdpA, KdpB and KdpC.

It is found in the cell inner membrane. The catalysed reaction is K(+)(out) + ATP + H2O = K(+)(in) + ADP + phosphate + H(+). Part of the high-affinity ATP-driven potassium transport (or Kdp) system, which catalyzes the hydrolysis of ATP coupled with the electrogenic transport of potassium into the cytoplasm. This subunit is responsible for energy coupling to the transport system and for the release of the potassium ions to the cytoplasm. The sequence is that of Potassium-transporting ATPase ATP-binding subunit from Yersinia pseudotuberculosis serotype I (strain IP32953).